The following is a 128-amino-acid chain: MYYIMFLYNMLLIIILIFYSIVGVPIIIFNNNYYWDPDIFLFIIYYFIKFIIIFNLYLYYMINYIVYTPSGSPPGRGTYILLYNMLYSYNMFIDYVMKFITCVTYMYLMFWLLSPTPSPYYVSEVPVS.

The protein localises to the mitochondrion. This is an uncharacterized protein from Saccharomyces cerevisiae (strain ATCC 204508 / S288c) (Baker's yeast).